A 379-amino-acid chain; its full sequence is Alcohol dehydrogenase 1 (379 aa).

Zn(2+)-binding residues include Cys47, Thr49, His69, Cys99, Cys102, Cys105, Cys113, and Cys177. Residues Thr49 and His69 each contribute to the an alcohol site. Thr49 lines the NAD(+) pocket. NAD(+)-binding positions include 202–207 (GLGAVG), Asp226, Arg231, Thr272, Val295, 295–297 (VGV), Phe322, and Arg372.

Belongs to the zinc-containing alcohol dehydrogenase family. Homodimer. Zn(2+) is required as a cofactor.

It localises to the cytoplasm. It catalyses the reaction a primary alcohol + NAD(+) = an aldehyde + NADH + H(+). The catalysed reaction is a secondary alcohol + NAD(+) = a ketone + NADH + H(+). In Hordeum vulgare (Barley), this protein is Alcohol dehydrogenase 1 (ADH1).